Consider the following 230-residue polypeptide: uncharacterized protein (230 aa).

The helical transmembrane segment at 17 to 37 (AGALSLGIGFFALASALWFLI) threads the bilayer. Asparagine 126 carries an N-linked (GlcNAc...) asparagine glycan.

The protein localises to the membrane. This is an uncharacterized protein from Mus musculus (Mouse).